The primary structure comprises 655 residues: T-lymphocyte surface antigen Ly-9 (655 aa).

An N-terminal signal peptide occupies residues 1–47 (MVAPKSHTDDWAPGPFSSKPQRSQLQIFSSVLQTSLLFLLMGLRASG). The 111-residue stretch at 48-158 (KDSAPTVVSG…FVYEQLQEPQ (111 aa)) folds into the Ig-like V-type 1 domain. Residues 48-454 (KDSAPTVVSG…ICSGPERNTK (407 aa)) lie on the Extracellular side of the membrane. N-linked (GlcNAc...) asparagine glycosylation is found at Asn68, Asn95, Asn120, Asn169, and Asn173. Positions 159–235 (VTMKSVKVSE…NPVSQRSSLP (77 aa)) constitute an Ig-like C2-type 1 domain. 2 cysteine pairs are disulfide-bonded: Cys172–Cys242 and Cys178–Cys222. The Ig-like V-type 2 domain maps to 251 to 363 (GTTGETVVGV…LLIYRRLRKP (113 aa)). 3 N-linked (GlcNAc...) asparagine glycosylation sites follow: Asn285, Asn413, and Asn424. One can recognise an Ig-like C2-type 2 domain in the interval 364-452 (KITWSLRHSE…ENICSGPERN (89 aa)). Cystine bridges form between Cys377-Cys446 and Cys383-Cys427. Residues 455-476 (LWIGLFLMVCLLCVGIFSWCIW) form a helical membrane-spanning segment. Topologically, residues 477 to 655 (KRKGRCSVPA…PESPTYENFT (179 aa)) are cytoplasmic. The interval 521–556 (PLRPARQQPTPTSDSSSDSNLTTEEDEDRPEVHKPI) is disordered. The segment covering 530–542 (TPTSDSSSDSNLT) has biased composition (low complexity). 2 consecutive short sequence motifs (ITSM) follow at residues 601 to 606 (TMYAQV) and 624 to 629 (TIYCSI). Tyr603 carries the post-translational modification Phosphotyrosine. Residues 633–655 (QVVPPPQQNDLEIPESPTYENFT) are disordered.

In terms of assembly, interacts with SH2D1A, SH2D1B and INPP5D. Interacts (via phosphorylated cytoplasmic domain) with PTPN11; the interaction is blocked by SH2D1A. As to expression, increased surface expression on T-cells of systemic lupus erythematosus (SLE) patients.

Its subcellular location is the membrane. The protein resides in the cell membrane. Self-ligand receptor of the signaling lymphocytic activation molecule (SLAM) family. SLAM receptors triggered by homo- or heterotypic cell-cell interactions are modulating the activation and differentiation of a wide variety of immune cells and thus are involved in the regulation and interconnection of both innate and adaptive immune response. Activities are controlled by presence or absence of small cytoplasmic adapter proteins, SH2D1A/SAP and/or SH2D1B/EAT-2. May participate in adhesion reactions between T lymphocytes and accessory cells by homophilic interaction. Promotes T-cell differentiation into a helper T-cell Th17 phenotype leading to increased IL-17 secretion; the costimulatory activity requires SH2D1A. Promotes recruitment of RORC to the IL-17 promoter. May be involved in the maintenance of peripheral cell tolerance by serving as a negative regulator of the immune response. May disable autoantibody responses and inhibit IFN-gamma secretion by CD4(+) T-cells. May negatively regulate the size of thymic innate CD8(+) T-cells and the development of invariant natural killer T (iNKT) cells. The sequence is that of T-lymphocyte surface antigen Ly-9 (LY9) from Homo sapiens (Human).